Here is a 518-residue protein sequence, read N- to C-terminus: Cytochrome P450 709B3 (518 aa).

A helical membrane pass occupies residues 3 to 23 (LISTINLLTIVLLLFVVSKIW). Residue Cys465 participates in heme binding.

It belongs to the cytochrome P450 family. Heme serves as cofactor. Highly expressed in rosette leaves and siliques, and at lower levels in flowers.

The protein localises to the membrane. Its function is as follows. Plays a role in abscisic acid (ABA) and salt stress response. May regulate the salt stress response independently of well-characterized pathways. Does not function as cytokinin hydroxylase in yeast heterologous system. The chain is Cytochrome P450 709B3 from Arabidopsis thaliana (Mouse-ear cress).